Reading from the N-terminus, the 417-residue chain is Origin of replication complex subunit 4 (417 aa).

An ATP-binding site is contributed by 59 to 66 (GPRGSGKA).

The protein belongs to the ORC4 family. Component of the origin recognition complex (ORC) composed of at least ORC1 (ORC1A or ORC1B), ORC2, ORC3, ORC4, ORC5 and ORC6. ORC is regulated in a cell-cycle and development dependent manner. It is sequentially assembled at the exit from anaphase of mitosis and disassembled as cells enter S phase. Interacts directly with ORC1A, ORC2, ORC3, ORC5 and ORC6. Follow a cell-cycle regulation with a peak at the G1/S-phase. Isoform AtORC4a is expressed at low levels ubiquitously. Isoform AtORC4b is mostly expressed in siliques, flowers and flower buds, and, to a lower exent, in roots, leaves and stems.

The protein localises to the nucleus. Functionally, component of the origin recognition complex (ORC) that binds origins of replication. DNA-binding is ATP-dependent. The specific DNA sequences that define origins of replication have not been identified yet. ORC is required to assemble the pre-replication complex necessary to initiate DNA replication. The sequence is that of Origin of replication complex subunit 4 from Arabidopsis thaliana (Mouse-ear cress).